The following is a 292-amino-acid chain: 33 kDa chaperonin (292 aa).

2 disulfide bridges follow: cysteine 237-cysteine 239 and cysteine 270-cysteine 273.

The protein belongs to the HSP33 family. Post-translationally, under oxidizing conditions two disulfide bonds are formed involving the reactive cysteines. Under reducing conditions zinc is bound to the reactive cysteines and the protein is inactive.

The protein localises to the cytoplasm. Redox regulated molecular chaperone. Protects both thermally unfolding and oxidatively damaged proteins from irreversible aggregation. Plays an important role in the bacterial defense system toward oxidative stress. This is 33 kDa chaperonin from Lachnoclostridium phytofermentans (strain ATCC 700394 / DSM 18823 / ISDg) (Clostridium phytofermentans).